A 175-amino-acid chain; its full sequence is Ribulose bisphosphate carboxylase small subunit, chloroplastic (175 aa).

The transit peptide at 1–46 (MAPTVMASSATSVAPFQGLKSTAGLPVSRRSNGASLGSVSNGGRIR) directs the protein to the chloroplast.

This sequence belongs to the RuBisCO small chain family. Heterohexadecamer of 8 large and 8 small subunits.

The protein resides in the plastid. The protein localises to the chloroplast. RuBisCO catalyzes two reactions: the carboxylation of D-ribulose 1,5-bisphosphate, the primary event in carbon dioxide fixation, as well as the oxidative fragmentation of the pentose substrate. Both reactions occur simultaneously and in competition at the same active site. Although the small subunit is not catalytic it is essential for maximal activity. This is Ribulose bisphosphate carboxylase small subunit, chloroplastic from Aegilops tauschii (Tausch's goatgrass).